The sequence spans 637 residues: Chaperone protein HtpG (637 aa).

The segment at 1–338 is a; substrate-binding; that stretch reads MMELKMHNVK…SPDLPLNISR (338 aa). Residues 339–558 are b; that stretch reads ETLQNNRVVE…EGAMDLRMER (220 aa). The tract at residues 493–512 is disordered; the sequence is KFSPEEKDKENKSDEERAEG. A c region spans residues 559-637; the sequence is FLREQNQLNY…LNNLLGKVII (79 aa).

Belongs to the heat shock protein 90 family. Homodimer.

Its subcellular location is the cytoplasm. In terms of biological role, molecular chaperone. Has ATPase activity. The sequence is that of Chaperone protein HtpG from Wolbachia sp. subsp. Brugia malayi (strain TRS).